The chain runs to 98 residues: NADH-ubiquinone oxidoreductase chain 4L (98 aa).

3 consecutive transmembrane segments (helical) span residues 1–21 (MSMV…GLLV), 29–49 (SLLC…ITIL), and 61–81 (IILL…LVMV).

Belongs to the complex I subunit 4L family. Core subunit of respiratory chain NADH dehydrogenase (Complex I) which is composed of 45 different subunits.

The protein resides in the mitochondrion inner membrane. The enzyme catalyses a ubiquinone + NADH + 5 H(+)(in) = a ubiquinol + NAD(+) + 4 H(+)(out). Core subunit of the mitochondrial membrane respiratory chain NADH dehydrogenase (Complex I) which catalyzes electron transfer from NADH through the respiratory chain, using ubiquinone as an electron acceptor. Part of the enzyme membrane arm which is embedded in the lipid bilayer and involved in proton translocation. The sequence is that of NADH-ubiquinone oxidoreductase chain 4L (MT-ND4L) from Mephitis mephitis (Striped skunk).